A 379-amino-acid chain; its full sequence is MLFHGITGGHIQGIMEEMERRSKSADNRLAKTIQVNGRETRMPPLSPEKPTLCAGCGGKISDRYYLLAVDKQWHLRCLKCCECKLALESELTCFAKDGSIYCKEDYYRRFSVQRCARCHLGISASEIVMRARESVYHLSCFTCTTCNKTLSTGDHFGMKENLVYRRAHFELLVQGDFHSQLNYTELSAKGGGLSALPYFTNGTGAVQKGRPRKRKSPALGVDIINYTSGCNENDTDLDRDQSYPPSQKTKRMRTSFKHHQLRTTKSYFAINHNPDAKDLKQLAQKTGLTKRVLQVWFQNARAKFRRNLLRQENGGGDKVEGPSLSAPASTDSAALTPTGAASTLSDLTSPSLNVGASVTPNMDSHESGSPSQTTLTNLF.

LIM zinc-binding domains lie at 51 to 112 (TLCA…RFSV) and 113 to 175 (QRCA…LVQG). Disordered stretches follow at residues 232-257 (ENDT…TSFK) and 310-379 (RQEN…TNLF). Positions 248–257 (KTKRMRTSFK) are enriched in basic residues. Residues 249–308 (TKRMRTSFKHHQLRTTKSYFAINHNPDAKDLKQLAQKTGLTKRVLQVWFQNARAKFRRNL) constitute a DNA-binding region (homeobox). Residues 326-379 (APASTDSAALTPTGAASTLSDLTSPSLNVGASVTPNMDSHESGSPSQTTLTNLF) show a composition bias toward polar residues.

In terms of tissue distribution, isoform 1 and isoform 3 are expressed in ovary, testis, brain and heart. Isoform 4 and isoform 5 are expressed in brain.

It localises to the nucleus. In terms of biological role, may be involved in gonadal development. The chain is LIM/homeobox protein Lhx9 (lhx9) from Glandirana rugosa (Japanese wrinkled frog).